A 111-amino-acid polypeptide reads, in one-letter code: WAP four-disulfide core domain protein 12 (111 aa).

The signal sequence occupies residues 1-23; sequence MGSSSFLVLMVSLTLVTLVAAEG. The 48-residue stretch at 27–74 folds into the WAP domain; it reads GIEKAGVCPADNVRCFKSDPPQCHTDQDCLGERKCCYLHCGFKCVIPV. 4 cysteine pairs are disulfide-bonded: cysteine 34/cysteine 62, cysteine 41/cysteine 66, cysteine 49/cysteine 61, and cysteine 55/cysteine 70. A disordered region spans residues 80–111; sequence GGNKDEDVSGPCPEPGWEAKSPGSSSTGCPQK. The span at 101–111 shows a compositional bias: polar residues; that stretch reads PGSSSTGCPQK.

The protein resides in the secreted. Antibacterial protein. Putative acid-stable proteinase inhibitor. This is WAP four-disulfide core domain protein 12 (WFDC12) from Chlorocebus aethiops (Green monkey).